A 180-amino-acid polypeptide reads, in one-letter code: Large ribosomal subunit protein uL5 (180 aa).

Belongs to the universal ribosomal protein uL5 family. In terms of assembly, part of the 50S ribosomal subunit; part of the 5S rRNA/L5/L18/L25 subcomplex. Contacts the 5S rRNA and the P site tRNA. Forms a bridge to the 30S subunit in the 70S ribosome.

Its function is as follows. This is one of the proteins that bind and probably mediate the attachment of the 5S RNA into the large ribosomal subunit, where it forms part of the central protuberance. In the 70S ribosome it contacts protein S13 of the 30S subunit (bridge B1b), connecting the 2 subunits; this bridge is implicated in subunit movement. Contacts the P site tRNA; the 5S rRNA and some of its associated proteins might help stabilize positioning of ribosome-bound tRNAs. This Clostridium botulinum (strain Loch Maree / Type A3) protein is Large ribosomal subunit protein uL5.